Here is a 360-residue protein sequence, read N- to C-terminus: tRNA (guanine-N(7)-)-methyltransferase (360 aa).

The tract at residues 1–32 is disordered; it reads MTPPPPKRQKRDEYRKATAEAASQPGPSDVAE. S-adenosyl-L-methionine-binding positions include glycine 99 and 122-123; that span reads EI. Positions 177 to 196 are disordered; it reads ADAASPVLSTDTEHTPTTLV. Over residues 183–196 the composition is skewed to polar residues; that stretch reads VLSTDTEHTPTTLV. S-adenosyl-L-methionine contacts are provided by residues 209–210 and cysteine 229; that span reads NT. Aspartate 232 is an active-site residue. Position 332–334 (332–334) interacts with S-adenosyl-L-methionine; the sequence is TEE.

The protein belongs to the class I-like SAM-binding methyltransferase superfamily. TrmB family. Forms a complex with trm82.

It localises to the nucleus. The catalysed reaction is guanosine(46) in tRNA + S-adenosyl-L-methionine = N(7)-methylguanosine(46) in tRNA + S-adenosyl-L-homocysteine. The protein operates within tRNA modification; N(7)-methylguanine-tRNA biosynthesis. Functionally, catalyzes the formation of N(7)-methylguanine at position 46 (m7G46) in tRNA. This is tRNA (guanine-N(7)-)-methyltransferase (trm8) from Neosartorya fischeri (strain ATCC 1020 / DSM 3700 / CBS 544.65 / FGSC A1164 / JCM 1740 / NRRL 181 / WB 181) (Aspergillus fischerianus).